The following is a 248-amino-acid chain: Glycoprotein BILF2 (248 aa).

Positions 1–17 (MTHLVLLLCCCVGSVCA) are cleaved as a signal peptide. Residues 19 to 125 (FSDLVKFENV…NVTLRNCSVA (107 aa)) enclose the Ig-like domain. N-linked (GlcNAc...) asparagine; by host glycans are attached at residues Asn-27, Asn-37, Asn-45, Asn-73, Asn-83, Asn-92, Asn-95, Asn-104, Asn-116, Asn-121, Asn-131, and Asn-144. An intrachain disulfide couples Cys-40 to Cys-115. The disordered stretch occupies residues 167–191 (VSHTTSTSHRPHRRPVSKRPTHKPV). Positions 175–188 (HRPHRRPVSKRPTH) are enriched in basic residues. The chain crosses the membrane as a helical span at residues 210–230 (WALLLITCAVVAPVLLIIIIS).

It belongs to the Epstein-Barr virus BILF2 protein family.

It localises to the membrane. The sequence is that of Glycoprotein BILF2 from Epstein-Barr virus (strain B95-8) (HHV-4).